A 125-amino-acid polypeptide reads, in one-letter code: Small ribosomal subunit protein uS11 (125 aa).

The protein belongs to the universal ribosomal protein uS11 family. In terms of assembly, part of the 30S ribosomal subunit. Interacts with proteins S7 and S18. Binds to IF-3.

Its function is as follows. Located on the platform of the 30S subunit, it bridges several disparate RNA helices of the 16S rRNA. Forms part of the Shine-Dalgarno cleft in the 70S ribosome. The sequence is that of Small ribosomal subunit protein uS11 from Aquifex aeolicus (strain VF5).